We begin with the raw amino-acid sequence, 707 residues long: Kinesin-like protein KIN-13B (707 aa).

Residues 152 to 477 (KIKVVVRKRP…LRYADRVKSL (326 aa)) enclose the Kinesin motor domain. ATP is bound at residue 243-250 (GQTGSGKT). A coiled-coil region spans residues 619-656 (EHLNELLQEEEDLVSAHRKQVEETLDMIKEEMNLLVEA).

This sequence belongs to the TRAFAC class myosin-kinesin ATPase superfamily. Kinesin family. KIN-13 subfamily.

This chain is Kinesin-like protein KIN-13B, found in Oryza sativa subsp. japonica (Rice).